The sequence spans 119 residues: MNLKQVGRFGENLAVDFLIKHGYEILRTNFRCRLGEIDIIAKEDKTIVFVEVKTRKSLKFGLPSESVNFKKQLHIKKVAEYFIAYHLSQDKYLYRFDVVEIFIDGKNNVTKINLIKDAF.

This sequence belongs to the UPF0102 family.

The chain is UPF0102 protein Athe_0977 from Caldicellulosiruptor bescii (strain ATCC BAA-1888 / DSM 6725 / KCTC 15123 / Z-1320) (Anaerocellum thermophilum).